Reading from the N-terminus, the 273-residue chain is 3-methyl-2-oxobutanoate hydroxymethyltransferase 1 (273 aa).

2 residues coordinate Mg(2+): Asp49 and Asp88. Residues 49-50 (DS), Asp88, and Lys118 each bind 3-methyl-2-oxobutanoate. Glu120 contributes to the Mg(2+) binding site. The Proton acceptor role is filled by Glu187.

Belongs to the PanB family. As to quaternary structure, homodecamer; pentamer of dimers. Requires Mg(2+) as cofactor.

Its subcellular location is the cytoplasm. It catalyses the reaction 3-methyl-2-oxobutanoate + (6R)-5,10-methylene-5,6,7,8-tetrahydrofolate + H2O = 2-dehydropantoate + (6S)-5,6,7,8-tetrahydrofolate. Its pathway is cofactor biosynthesis; (R)-pantothenate biosynthesis; (R)-pantoate from 3-methyl-2-oxobutanoate: step 1/2. Its function is as follows. Catalyzes the reversible reaction in which hydroxymethyl group from 5,10-methylenetetrahydrofolate is transferred onto alpha-ketoisovalerate to form ketopantoate. The chain is 3-methyl-2-oxobutanoate hydroxymethyltransferase 1 from Pseudomonas aeruginosa (strain UCBPP-PA14).